The chain runs to 342 residues: Eukaryotic translation initiation factor 3 subunit F (342 aa).

In terms of domain architecture, MPN spans 30-166 (VAIQPQAVFS…SRTYISAPIG (137 aa)). The interval 310–342 (TDALAGDGQKDGGDRKQGGDRRNKGRQQRTQEA) is disordered. Basic and acidic residues predominate over residues 317–331 (GQKDGGDRKQGGDRR).

The protein belongs to the eIF-3 subunit F family. In terms of assembly, component of the eukaryotic translation initiation factor 3 (eIF-3) complex.

The protein localises to the cytoplasm. Component of the eukaryotic translation initiation factor 3 (eIF-3) complex, which is involved in protein synthesis of a specialized repertoire of mRNAs and, together with other initiation factors, stimulates binding of mRNA and methionyl-tRNAi to the 40S ribosome. The eIF-3 complex specifically targets and initiates translation of a subset of mRNAs involved in cell proliferation. In Phaeosphaeria nodorum (strain SN15 / ATCC MYA-4574 / FGSC 10173) (Glume blotch fungus), this protein is Eukaryotic translation initiation factor 3 subunit F.